The sequence spans 847 residues: uncharacterized protein (847 aa).

Positions 116 to 126 are enriched in polar residues; it reads TGSSELTTSKT. 3 disordered regions span residues 116-153, 208-245, and 361-392; these read TGSS…TPIE, LKNF…RLSP, and DLEK…SNVI. A compositionally biased stretch (basic and acidic residues) spans 128–145; that stretch reads IDVDTKEQENRLKQKAEA. The segment covering 368-378 has biased composition (polar residues); that stretch reads SSSASLSTNKL.

This is an uncharacterized protein from Caenorhabditis elegans.